The sequence spans 692 residues: DNA ligase (692 aa).

NAD(+) is bound by residues 34–38, 83–84, and glutamate 124; these read DAEYD and SL. Residue lysine 126 is the N6-AMP-lysine intermediate of the active site. Arginine 147, glutamate 193, lysine 310, and lysine 334 together coordinate NAD(+). Zn(2+) is bound by residues cysteine 428, cysteine 431, cysteine 446, and cysteine 452. The BRCT domain maps to 612-692; it reads AGVAGVSGKT…ALLALLAGNA (81 aa).

Belongs to the NAD-dependent DNA ligase family. LigA subfamily. The cofactor is Mg(2+). Mn(2+) is required as a cofactor.

The enzyme catalyses NAD(+) + (deoxyribonucleotide)n-3'-hydroxyl + 5'-phospho-(deoxyribonucleotide)m = (deoxyribonucleotide)n+m + AMP + beta-nicotinamide D-nucleotide.. Its function is as follows. DNA ligase that catalyzes the formation of phosphodiester linkages between 5'-phosphoryl and 3'-hydroxyl groups in double-stranded DNA using NAD as a coenzyme and as the energy source for the reaction. It is essential for DNA replication and repair of damaged DNA. In Laribacter hongkongensis (strain HLHK9), this protein is DNA ligase.